The chain runs to 499 residues: Cytochrome P450 705A12 (499 aa).

Residues 4-24 (LIIVDFQNISIFILLCLFSFL) form a helical membrane-spanning segment. Cys-439 serves as a coordination point for heme.

This sequence belongs to the cytochrome P450 family. Heme serves as cofactor.

It localises to the membrane. May be involved in hydroxylation of the triterpene marneral. This is Cytochrome P450 705A12 from Arabidopsis thaliana (Mouse-ear cress).